The sequence spans 395 residues: Cyclin-A2 (395 aa).

A disordered region spans residues 1–93 (MLAEQENQEN…EEAADAPGLR (93 aa)). A compositionally biased stretch (low complexity) spans 27-60 (ALGLLRGGPARPGPAAQAARNGEGRGAAAGQQQQ).

The protein belongs to the cyclin family. Cyclin AB subfamily. As to quaternary structure, interacts with the CDK1 and CDK2 protein kinases to form serine/threonine kinase holoenzyme complexes.

Its subcellular location is the nucleus. It is found in the cytoplasm. In terms of biological role, cyclin which controls both the G1/S and the G2/M transition phases of the cell cycle. Functions through the formation of specific serine/threonine kinase holoenzyme complexes with the cyclin-dependent protein kinases CDK1 and CDK2. The cyclin subunit confers the substrate specificity of these complexes and differentially interacts with and activates CDK1 and CDK2 throughout the cell cycle. The protein is Cyclin-A2 of Gallus gallus (Chicken).